Consider the following 526-residue polypeptide: ATP synthase subunit alpha (526 aa).

171–178 (GDRQTGKT) contributes to the ATP binding site.

Belongs to the ATPase alpha/beta chains family. As to quaternary structure, F-type ATPases have 2 components, CF(1) - the catalytic core - and CF(0) - the membrane proton channel. CF(1) has five subunits: alpha(3), beta(3), gamma(1), delta(1), epsilon(1). CF(0) has four main subunits: a(1), b(1), b'(1) and c(9-12).

The protein resides in the cell inner membrane. The enzyme catalyses ATP + H2O + 4 H(+)(in) = ADP + phosphate + 5 H(+)(out). In terms of biological role, produces ATP from ADP in the presence of a proton gradient across the membrane. The alpha chain is a regulatory subunit. The sequence is that of ATP synthase subunit alpha from Chlorobium phaeobacteroides (strain DSM 266 / SMG 266 / 2430).